The chain runs to 154 residues: Xanthine-guanine phosphoribosyltransferase (154 aa).

5-phospho-alpha-D-ribose 1-diphosphate is bound by residues Arg37–Gly38, Arg69, and Glu88–Thr96. Arg69 provides a ligand contact to GMP. Asp89 contacts Mg(2+). Residues Asp92 and Ile135 each coordinate guanine. Positions 92 and 135 each coordinate xanthine. Residues Asp92–Thr96 and Trp134–Ile135 each bind GMP.

It belongs to the purine/pyrimidine phosphoribosyltransferase family. XGPT subfamily. Homotetramer. Mg(2+) serves as cofactor.

Its subcellular location is the cell inner membrane. The enzyme catalyses GMP + diphosphate = guanine + 5-phospho-alpha-D-ribose 1-diphosphate. The catalysed reaction is XMP + diphosphate = xanthine + 5-phospho-alpha-D-ribose 1-diphosphate. It catalyses the reaction IMP + diphosphate = hypoxanthine + 5-phospho-alpha-D-ribose 1-diphosphate. It functions in the pathway purine metabolism; GMP biosynthesis via salvage pathway; GMP from guanine: step 1/1. It participates in purine metabolism; XMP biosynthesis via salvage pathway; XMP from xanthine: step 1/1. Its function is as follows. Purine salvage pathway enzyme that catalyzes the transfer of the ribosyl-5-phosphate group from 5-phospho-alpha-D-ribose 1-diphosphate (PRPP) to the N9 position of the 6-oxopurines guanine and xanthine to form the corresponding ribonucleotides GMP (guanosine 5'-monophosphate) and XMP (xanthosine 5'-monophosphate), with the release of PPi. To a lesser extent, also acts on hypoxanthine. The protein is Xanthine-guanine phosphoribosyltransferase of Vibrio vulnificus (strain CMCP6).